Reading from the N-terminus, the 391-residue chain is Succinyl-diaminopimelate desuccinylase (391 aa).

H74 is a Zn(2+) binding site. The active site involves D76. Residue D107 participates in Zn(2+) binding. The active-site Proton acceptor is the E141. The Zn(2+) site is built by E142, E170, and H360.

It belongs to the peptidase M20A family. DapE subfamily. In terms of assembly, homodimer. Zn(2+) serves as cofactor. The cofactor is Co(2+).

The catalysed reaction is N-succinyl-(2S,6S)-2,6-diaminopimelate + H2O = (2S,6S)-2,6-diaminopimelate + succinate. It functions in the pathway amino-acid biosynthesis; L-lysine biosynthesis via DAP pathway; LL-2,6-diaminopimelate from (S)-tetrahydrodipicolinate (succinylase route): step 3/3. In terms of biological role, catalyzes the hydrolysis of N-succinyl-L,L-diaminopimelic acid (SDAP), forming succinate and LL-2,6-diaminopimelate (DAP), an intermediate involved in the bacterial biosynthesis of lysine and meso-diaminopimelic acid, an essential component of bacterial cell walls. This Variovorax paradoxus (strain S110) protein is Succinyl-diaminopimelate desuccinylase.